A 94-amino-acid chain; its full sequence is MKVFVVLLCLSLAAVYALEERLDKDADIMLDSPADMERAKDGDVEGPAGCKKYDVECDSGECCQKQYLWYKWRPLDCRCLKSGFFSSKCVCRDV.

Positions 1–17 (MKVFVVLLCLSLAAVYA) are cleaved as a signal peptide. Positions 18 to 38 (LEERLDKDADIMLDSPADMER) are excised as a propeptide. 4 cysteine pairs are disulfide-bonded: cysteine 50-cysteine 63, cysteine 57-cysteine 77, cysteine 62-cysteine 91, and cysteine 79-cysteine 89.

This sequence belongs to the neurotoxin 26 (DTX) family. As to expression, expressed by the venom gland.

The protein localises to the secreted. Its function is as follows. Insecticidal toxin. This toxin promotes opening of insect Nav channels. The toxin binds to the S1-S2 and S3-S4 loops in the domain II voltage-sensor of insect Nav channels (i.e., receptor site 4). The American cockroach P.americana is largely resistant to the effects of this toxin due to an unusual sequence within the domain II S1-S2 loop. In vivo, paralyzes lepidopteran and dipteran larvae. Paralyzed insects ultimately die from secondary effects of starvation and dehydration. The protein is Beta-diguetoxin-Dc1a of Diguetia canities (Desert bush spider).